The primary structure comprises 96 residues: RING finger protein Z (96 aa).

Residues 1 to 10 are compositionally biased toward basic and acidic residues; the sequence is MGNCRSKQES. The disordered stretch occupies residues 1-21; it reads MGNCRSKQESHPICPNTQTPE. The N-myristoyl glycine; by host moiety is linked to residue G2. The RING-type; atypical zinc-finger motif lies at 41-77; sequence CKCCWFADRNLINCSDHYLCLRCLNVMLRTSNLCNIC. The PTAP/PSAP motif signature appears at 91 to 94; sequence PTAP.

It belongs to the arenaviridae Z protein family. As to quaternary structure, interacts with protein NP; this interaction probably directs the encapsidated genome to budding sites. Interacts (via RING domain) with polymerase L; this interaction inhibits viral transcription and replication, Z partially blocks the product exit tunnel for the releasing nascent RNA product. Interacts with the glycoprotein complex; this interaction plays a role in virion budding. Interacts with host eIF4E; this interaction results in eIF4E reduced affinity for its substrate, the 5'-m7 G cap structure. Interacts (via late-budding domain) with host TSG101; this interaction is essential for budding and release of viral particles. Interacts with host RPLP0; this interaction may serve to load ribosome-like particles inside the virion. Interacts with host PML; this interaction induces PML bodies redistribution in the cytoplasm upon viral infection. In terms of processing, myristoylation is required for the role of RING finger protein Z in assembly and budding.

Its subcellular location is the virion. The protein localises to the host cytoplasm. The protein resides in the host perinuclear region. It localises to the host cell membrane. In terms of biological role, plays a crucial role in virion assembly and budding. Expressed late in the virus life cycle, it acts as an inhibitor of viral transcription and RNA synthesis by interacting with the viral polymerase L. Presumably recruits the NP encapsidated genome to cellular membranes at budding sites via direct interaction with NP. Plays critical roles in the final steps of viral release by interacting with host TSG101, a member of the vacuolar protein-sorting pathway and using other cellular host proteins involved in vesicle formation pathway. The budding of the virus progeny occurs after association of protein Z with the viral glycoprotein complex SSP-GP1-GP2 at the cell periphery, step that requires myristoylation of protein Z. Also selectively represses protein production by associating with host eIF4E. In cell-based minigenome assay, has an inhibitory effect on the ribonucleoprotein machinery (vRNP), which is responsible for the replication and transcription of the viral genome. The chain is RING finger protein Z from Hylaeamys megacephalus (Large-headed rice rat).